The sequence spans 196 residues: Holliday junction branch migration complex subunit RuvA (196 aa).

The tract at residues 1 to 65 (MIGNLSGTVD…ENTTQLYGFI (65 aa)) is domain I. Positions 66-143 (NKEEQSCLRL…KLETNNNNFY (78 aa)) are domain II. Residues 144–147 (PINE) are flexible linker. The interval 147–196 (EDAVSALINLGYEKTKVYDTIKKYKPNLDTKDIIRTALKELSNYEIDIMQ) is domain III.

It belongs to the RuvA family. Homotetramer. Forms an RuvA(8)-RuvB(12)-Holliday junction (HJ) complex. HJ DNA is sandwiched between 2 RuvA tetramers; dsDNA enters through RuvA and exits via RuvB. An RuvB hexamer assembles on each DNA strand where it exits the tetramer. Each RuvB hexamer is contacted by two RuvA subunits (via domain III) on 2 adjacent RuvB subunits; this complex drives branch migration. In the full resolvosome a probable DNA-RuvA(4)-RuvB(12)-RuvC(2) complex forms which resolves the HJ.

The protein localises to the cytoplasm. Its function is as follows. The RuvA-RuvB-RuvC complex processes Holliday junction (HJ) DNA during genetic recombination and DNA repair, while the RuvA-RuvB complex plays an important role in the rescue of blocked DNA replication forks via replication fork reversal (RFR). RuvA specifically binds to HJ cruciform DNA, conferring on it an open structure. The RuvB hexamer acts as an ATP-dependent pump, pulling dsDNA into and through the RuvAB complex. HJ branch migration allows RuvC to scan DNA until it finds its consensus sequence, where it cleaves and resolves the cruciform DNA. The sequence is that of Holliday junction branch migration complex subunit RuvA from Wolbachia sp. subsp. Brugia malayi (strain TRS).